Here is an 86-residue protein sequence, read N- to C-terminus: Testis-expressed protein 54 (86 aa).

Residues 1–34 (MGCCQDKNRWASDEQARDEVTEDGREGNEVDNSG) are compositionally biased toward basic and acidic residues. 2 disordered regions span residues 1 to 43 (MGCC…SNES) and 57 to 86 (SRRE…PEKG).

Expressed in Testis.

The sequence is that of Testis-expressed protein 54 from Mus musculus (Mouse).